Consider the following 91-residue polypeptide: Small ribosomal subunit protein uS15 (91 aa).

It belongs to the universal ribosomal protein uS15 family. As to quaternary structure, part of the 30S ribosomal subunit. Forms a bridge to the 50S subunit in the 70S ribosome, contacting the 23S rRNA.

One of the primary rRNA binding proteins, it binds directly to 16S rRNA where it helps nucleate assembly of the platform of the 30S subunit by binding and bridging several RNA helices of the 16S rRNA. In terms of biological role, forms an intersubunit bridge (bridge B4) with the 23S rRNA of the 50S subunit in the ribosome. The protein is Small ribosomal subunit protein uS15 of Hydrogenobaculum sp. (strain Y04AAS1).